The chain runs to 290 residues: Elongation factor Ts (290 aa).

Residues 82-85 (TDFV) are involved in Mg(2+) ion dislocation from EF-Tu.

The protein belongs to the EF-Ts family.

Its subcellular location is the cytoplasm. Associates with the EF-Tu.GDP complex and induces the exchange of GDP to GTP. It remains bound to the aminoacyl-tRNA.EF-Tu.GTP complex up to the GTP hydrolysis stage on the ribosome. In Cellvibrio japonicus (strain Ueda107) (Pseudomonas fluorescens subsp. cellulosa), this protein is Elongation factor Ts.